A 736-amino-acid polypeptide reads, in one-letter code: Gingipain R2 (736 aa).

An N-terminal signal peptide occupies residues 1–24 (MKKNFSRIVSIVAFSSLLGGMAFA). A propeptide spanning residues 25-229 (QPAERGRNPQ…SVFMNYEATR (205 aa)) is cleaved from the precursor. Residues aspartate 307, valine 329, aspartate 332, tyrosine 334, glutamate 336, glutamate 390, and histidine 395 each coordinate Ca(2+). The Proton donor role is filled by histidine 440. Cysteine 473 acts as the Nucleophile in catalysis. Residues phenylalanine 478, glutamate 487, aspartate 521, glutamate 522, glutamate 525, histidine 531, aspartate 613, and glutamate 639 each coordinate Ca(2+).

Belongs to the peptidase C25 family.

Its subcellular location is the secreted. The catalysed reaction is Hydrolysis of proteins and small molecule substrates, with a preference for Arg in P1.. Functionally, thiol protease. Acts synergistically with RgpA to catalyze the maturation of fimbrial subunits, such as FimA. Its proteolytic activity is a major factor in both periodontal tissue destruction and in evasion of host defense mechanisms. This Porphyromonas gingivalis (strain ATCC 33277 / DSM 20709 / CIP 103683 / JCM 12257 / NCTC 11834 / 2561) protein is Gingipain R2.